We begin with the raw amino-acid sequence, 291 residues long: T-cell leukemia homeobox protein 3 (291 aa).

The interval 1 to 56 (MEAPASAQTPHPHEPISFGIDQILNSPDQDSAPAPRGPDGASYLGGPPGGRPGATY) is disordered. Residues 166-225 (RKKPRTSFSRVQICELEKRFHRQKYLASAERAALAKSLKMTDAQVKTWFQNRRTKWRRQT) constitute a DNA-binding region (homeobox).

The protein localises to the nucleus. This Homo sapiens (Human) protein is T-cell leukemia homeobox protein 3 (TLX3).